The primary structure comprises 156 residues: SsrA-binding protein (156 aa).

It belongs to the SmpB family.

Its subcellular location is the cytoplasm. Functionally, required for rescue of stalled ribosomes mediated by trans-translation. Binds to transfer-messenger RNA (tmRNA), required for stable association of tmRNA with ribosomes. tmRNA and SmpB together mimic tRNA shape, replacing the anticodon stem-loop with SmpB. tmRNA is encoded by the ssrA gene; the 2 termini fold to resemble tRNA(Ala) and it encodes a 'tag peptide', a short internal open reading frame. During trans-translation Ala-aminoacylated tmRNA acts like a tRNA, entering the A-site of stalled ribosomes, displacing the stalled mRNA. The ribosome then switches to translate the ORF on the tmRNA; the nascent peptide is terminated with the 'tag peptide' encoded by the tmRNA and targeted for degradation. The ribosome is freed to recommence translation, which seems to be the essential function of trans-translation. In Staphylococcus epidermidis (strain ATCC 35984 / DSM 28319 / BCRC 17069 / CCUG 31568 / BM 3577 / RP62A), this protein is SsrA-binding protein.